Here is a 69-residue protein sequence, read N- to C-terminus: uncharacterized protein (69 aa).

Residues 1–15 (MLLYIVIIVACIISK) are Cytoplasmic-facing. A helical membrane pass occupies residues 16–36 (LVPNEYWAIHLFFIIMIFMVY). Residues 37–69 (MYEKLDIHQKYQFWNYTMSGLSGHNVQITCKCY) are Extracellular-facing. N51 is a glycosylation site (N-linked (GlcNAc...) asparagine; by host).

Belongs to the asfivirus X69R family.

The protein resides in the host membrane. This is an uncharacterized protein from Ornithodoros (relapsing fever ticks).